Consider the following 498-residue polypeptide: Glycylpeptide N-tetradecanoyltransferase 2 (498 aa).

A disordered region spans residues 1 to 88 (MAEDSESAAS…QPSKNPSVPM (88 aa)). Over residues 15–32 (ELDDQDTCGIDGDNEEET) the composition is skewed to acidic residues. Position 38 is a phosphoserine (Ser-38). The segment covering 45 to 57 (AKKKKKKQKRKKE) has biased composition (basic residues). Residues 61 to 86 (SGGTKSDSASDSQEIKIQQPSKNPSV) are compositionally biased toward polar residues. Tetradecanoyl-CoA is bound by residues His-117, Trp-122, Leu-250, Val-252, Ser-258, Arg-260, Val-261, and Ala-262.

The protein belongs to the NMT family.

Its subcellular location is the cytoplasm. The protein resides in the membrane. The enzyme catalyses N-terminal glycyl-[protein] + tetradecanoyl-CoA = N-tetradecanoylglycyl-[protein] + CoA + H(+). It catalyses the reaction N-terminal glycyl-L-lysyl-[protein] + tetradecanoyl-CoA = N-terminal glycyl-(N(6)-tetradecanoyl)-L-lysyl-[protein] + CoA + H(+). In terms of biological role, adds a myristoyl group to the N-terminal glycine residue of certain cellular and viral proteins. Also able to mediate N-terminal lysine myristoylation of proteins: catalyzes myristoylation of ARF6 on both 'Gly-2' and 'Lys-3'. Lysine myristoylation is required to maintain ARF6 on membranes during the GTPase cycle. The polypeptide is Glycylpeptide N-tetradecanoyltransferase 2 (Homo sapiens (Human)).